A 217-amino-acid chain; its full sequence is Homologous-pairing protein 2 homolog (217 aa).

A coiled-coil region spans residues Ala-84–Asn-152. The tract at residues Thr-118–Glu-182 is DNA-binding.

This sequence belongs to the HOP2 family. As to quaternary structure, interacts with the DNA-binding domain of the nuclear receptors NR3C1/GR, ESR2/ER-beta, THRB and RXRA. Forms a stable heterodimer with MND1. Interacts with PSMC3/TBP1. Post-translationally, phosphorylated by PKA, PKC and MAPK. In terms of tissue distribution, highly expressed in testis and more specifically in spermatocytes. Detected in spleen, ovary and thymus.

The protein resides in the nucleus. In terms of biological role, plays an important role in meiotic recombination. Stimulates DMC1-mediated strand exchange required for pairing homologous chromosomes during meiosis. The complex PSMC3IP/MND1 binds DNA, stimulates the recombinase activity of DMC1 as well as DMC1 D-loop formation from double-strand DNA. This complex stabilizes presynaptic RAD51 and DMC1 filaments formed on single strand DNA to capture double-strand DNA. This complex stimulates both synaptic and presynaptic critical steps in RAD51 and DMC1-promoted homologous pairing. May inhibit HIV-1 viral protein TAT activity and modulate the activity of proteasomes through association with PSMC3. The polypeptide is Homologous-pairing protein 2 homolog (Psmc3ip) (Mus musculus (Mouse)).